Consider the following 917-residue polypeptide: Lipoxygenase 6, chloroplastic (917 aa).

The transit peptide at 1–40 directs the protein to the chloroplast; the sequence is MFVASPVKTNFNGVSLVKSPAFSALSCRKQHRVPISRQVR. Residues 46–57 show a composition bias toward basic and acidic residues; it reads EEKAVDQEDGKK. The disordered stretch occupies residues 46-66; that stretch reads EEKAVDQEDGKKSTNKPLINS. Residues 98–216 enclose the PLAT domain; that stretch reads ERFEHQLELF…DNPQARIIFR (119 aa). The 699-residue stretch at 219-917 folds into the Lipoxygenase domain; sequence PCLPSETPDG…GRGIPNSISI (699 aa). Fe cation-binding residues include His575, His580, His767, and Asn771. The interval 880-904 is disordered; that stretch reads KDKKLKNRTGAGMPPYELLLPTSPH. Ile917 serves as a coordination point for Fe cation.

Belongs to the lipoxygenase family. Fe cation serves as cofactor.

Its subcellular location is the plastid. It is found in the chloroplast. The enzyme catalyses (9Z,12Z)-octadecadienoate + O2 = (13S)-hydroperoxy-(9Z,11E)-octadecadienoate. The catalysed reaction is (9Z,12Z,15Z)-octadecatrienoate + O2 = (13S)-hydroperoxy-(9Z,11E,15Z)-octadecatrienoate. It participates in lipid metabolism; oxylipin biosynthesis. Its function is as follows. Plant lipoxygenases may be involved in a number of diverse aspects of plant physiology including growth and development, pest resistance, and senescence or responses to wounding. Catalyzes the hydroperoxidation of lipids containing a cis,cis-1,4-pentadiene structure. 13S-lipoxygenase that can use linolenic acid as substrates. This chain is Lipoxygenase 6, chloroplastic, found in Arabidopsis thaliana (Mouse-ear cress).